The sequence spans 191 residues: Fe/S biogenesis protein NfuA (191 aa).

Positions 149 and 152 each coordinate [4Fe-4S] cluster.

Belongs to the NfuA family. As to quaternary structure, homodimer. [4Fe-4S] cluster is required as a cofactor.

Involved in iron-sulfur cluster biogenesis. Binds a 4Fe-4S cluster, can transfer this cluster to apoproteins, and thereby intervenes in the maturation of Fe/S proteins. Could also act as a scaffold/chaperone for damaged Fe/S proteins. The sequence is that of Fe/S biogenesis protein NfuA from Photorhabdus laumondii subsp. laumondii (strain DSM 15139 / CIP 105565 / TT01) (Photorhabdus luminescens subsp. laumondii).